Consider the following 548-residue polypeptide: CTP synthase (548 aa).

Residues M1–L270 are amidoligase domain. S13 contributes to the CTP binding site. Residue S13 coordinates UTP. ATP-binding positions include S14–I19 and D71. Residues D71 and E144 each coordinate Mg(2+). CTP is bound by residues D151–E153, K191–Q196, and K227. UTP contacts are provided by residues K191–Q196 and K227. Residues T295–R545 enclose the Glutamine amidotransferase type-1 domain. G356 is an L-glutamine binding site. C383 serves as the catalytic Nucleophile; for glutamine hydrolysis. L-glutamine-binding positions include L384 to Q387, E407, and R473. Catalysis depends on residues H518 and E520.

The protein belongs to the CTP synthase family. In terms of assembly, homotetramer.

It carries out the reaction UTP + L-glutamine + ATP + H2O = CTP + L-glutamate + ADP + phosphate + 2 H(+). The catalysed reaction is L-glutamine + H2O = L-glutamate + NH4(+). It catalyses the reaction UTP + NH4(+) + ATP = CTP + ADP + phosphate + 2 H(+). It participates in pyrimidine metabolism; CTP biosynthesis via de novo pathway; CTP from UDP: step 2/2. Allosterically activated by GTP, when glutamine is the substrate; GTP has no effect on the reaction when ammonia is the substrate. The allosteric effector GTP functions by stabilizing the protein conformation that binds the tetrahedral intermediate(s) formed during glutamine hydrolysis. Inhibited by the product CTP, via allosteric rather than competitive inhibition. In terms of biological role, catalyzes the ATP-dependent amination of UTP to CTP with either L-glutamine or ammonia as the source of nitrogen. Regulates intracellular CTP levels through interactions with the four ribonucleotide triphosphates. This is CTP synthase from Bordetella petrii (strain ATCC BAA-461 / DSM 12804 / CCUG 43448).